Consider the following 1093-residue polypeptide: MSWFNASQLSSFAKQALSQAQKSIDRVLDIQEEEPSIWAETIPYGEPGISSPVSGGWDTSTWGLKSNTEPQSPPIASPKAITKPVRRTVVDESENFFSAFLSPTDVQTIQKSPVVSKPPAKSQRPEEEVKSSLHESLHIGQSRTPETTESQVKDSSLCVSGETLAAGTSSPKTEGKHEETVNKESDMKVPTVSLKVSESVIDVKTTMESISNTSTQSLTAETKDIALEPKEQKHEDRQSNTPSPPVSTFSSGTSTTSDIEVLDHESVISESSASSRQETTDSKSSLHLMQTSFQLLSASACPEYNRLDDFQKLTESCCSSDAFERIDSFSVQSLDSRSVSEINSDDELSGKGYALVPIIVNSSTPKSKTVESAEGKSEEVNETLVIPTEEAEMEESGRSATPVNCEQPDILVSSTPINEGQTVLDKVAEQCEPAESQPEALSEKEDVCKTVEFLNEKLEKREAQLLSLSKEKALLEEAFDNLKDEMFRVKEESSSISSLKDEFTQRIAEAEKKVQLACKERDAAKKEIKNIKEELATRLNSSETADLLKEKDEQIRGLMEEGEKLSKQQLHNSNIIKKLRAKDKENENMVAKLNKKVKELEEELQHLKQVLDGKEEVEKQHRENIKKLNSMVERQEKDLGRLQVDMDELEEKNRSIQAALDSAYKELTDLHKANAAKDSEAQEAALSREMKAKEELSAALEKAQEEARQQQETLAIQVGDLRLALQRTEQAAARKEDYLRHEIGELQQRLQEAENRNQELSQSVSSTTRPLLRQIENLQATLGSQTSSWEKLEKNLSDRLGESQTLLAAAVERERAATEELLANKIQMSSMESQNSLLRQENSRFQAQLESEKNRLCKLEDENNRYQVELENLKDEYVRTLEETRKEKTLLNSQLEMERMKVEQERKKAIFTQETIKEKERKPFSVSSTPTMSRSSSISGVDMAGLQTSFLSQDESHDHSFGPMPISANGSNLYDAVRMGAGSSIIENLQSQLKLREGEITHLQLEIGNLEKTRSIMAEELVKLTNQNDELEEKVKEIPKLRTQLRDLDQRYNTILQMYGEKAEEAEELRLDLEDVKNMYKTQIDELLRQSLS.

2 disordered regions span residues 38–80 (WAET…SPKA) and 108–189 (TIQK…DMKV). The span at 51 to 70 (SPVSGGWDTSTWGLKSNTEP) shows a compositional bias: polar residues. Ser-72, Ser-77, Ser-112, and Ser-136 each carry phosphoserine. The span at 123 to 137 (QRPEEEVKSSLHESL) shows a compositional bias: basic and acidic residues. Positions 139–158 (IGQSRTPETTESQVKDSSLC) are enriched in polar residues. Over residues 173–187 (TEGKHEETVNKESDM) the composition is skewed to basic and acidic residues. 2 positions are modified to phosphoserine: Ser-199 and Ser-217. A compositionally biased stretch (basic and acidic residues) spans 229–238 (PKEQKHEDRQ). Disordered stretches follow at residues 229–260 (PKEQ…SDIE) and 266–285 (SVIS…SKSS). Residues 246–257 (VSTFSSGTSTTS) are compositionally biased toward low complexity. A phosphoserine mark is found at Ser-328, Ser-330, Ser-333, Ser-338, Ser-344, Ser-413, Ser-542, Ser-925, and Ser-928. The segment at 333 to 342 (SLDSRSVSEI) is interaction with Elongin BC complex. Positions 439-922 (EALSEKEDVC…QETIKEKERK (484 aa)) form a coiled coil. Positions 919-939 (KERKPFSVSSTPTMSRSSSIS) are disordered. Low complexity predominate over residues 925–939 (SVSSTPTMSRSSSIS). Thr-929 is subject to Phosphothreonine. The residue at position 933 (Ser-933) is a Phosphoserine. Positions 984–1092 (SIIENLQSQL…QIDELLRQSL (109 aa)) form a coiled coil.

As to quaternary structure, interacts with TRNP1; may regulate TRNP1 proteasomal degradation. Component of the SNF/SWI transcription factor complexes. Interacts with RAB6A. Interacts with STAT3 and FER. Interacts with TCEB1. In terms of processing, phosphorylated by FER.

The protein resides in the cytoplasm. The protein localises to the nucleus. It is found in the golgi apparatus membrane. Functionally, potential coactivator of the androgen receptor. Mediates STAT3 degradation. May play critical roles in two RAB6-dependent retrograde transport processes: one from endosomes to the Golgi and the other from the Golgi to the ER. This protein binds the HIV-1 TATA element and inhibits transcriptional activation by the TATA-binding protein (TBP). This is TATA element modulatory factor (TMF1) from Homo sapiens (Human).